A 247-amino-acid chain; its full sequence is 2,3-bisphosphoglycerate-dependent phosphoglycerate mutase (247 aa).

Substrate is bound by residues 8–15 (RHGESQWN), 21–22 (TG), Arg-60, 87–90 (ERHY), Lys-98, 114–115 (RR), and 183–184 (GN). His-9 (tele-phosphohistidine intermediate) is an active-site residue. Glu-87 serves as the catalytic Proton donor/acceptor.

This sequence belongs to the phosphoglycerate mutase family. BPG-dependent PGAM subfamily.

It carries out the reaction (2R)-2-phosphoglycerate = (2R)-3-phosphoglycerate. Its pathway is carbohydrate degradation; glycolysis; pyruvate from D-glyceraldehyde 3-phosphate: step 3/5. In terms of biological role, catalyzes the interconversion of 2-phosphoglycerate and 3-phosphoglycerate. This chain is 2,3-bisphosphoglycerate-dependent phosphoglycerate mutase, found in Chlorobium phaeobacteroides (strain BS1).